Consider the following 413-residue polypeptide: MAPPSVFAEVPQAQPVLVFKLTADFREDPDPRKVNLGVGAYRTDDCHPWVLPVVKKVEQKIANDNSLNHEYLPILGLAEFRSCASRLALGDDSPALKEKRVGGVQSLGGTGALRIGADFLARWYNGTNNKNTPVYVSSPTWENHNAVFSAAGFKDIRSYRYWDAEKRGLDLQGLLNDLENAPEFSIVVLHACAHNPTGTDPTPEQWKQIASVMKHRFLFPFFDSAYQGFASGNLERDAWAIRYFVSEGFEFFCAQSFSKNFGLYNERVGNLTVVGKEPEGILRVLSQMEKIVRITWSNPPAQGARIVASTLSNPELFEEWTGNVKTMADRILTMRSELRARLEALKTPGTWNHITDQIGMFSFTGLNPKQVEYLINEKHIYLLPSGRINVSGLTTKNLDYVATSIHEAVTKIQ.

L-aspartate-binding residues include G39 and W141. Phosphoserine is present on S149. L-aspartate is bound at residue N195. K259 is modified (N6-(pyridoxal phosphate)lysine). L-aspartate is bound at residue R387.

It belongs to the class-I pyridoxal-phosphate-dependent aminotransferase family. In terms of assembly, homodimer. Pyridoxal 5'-phosphate serves as cofactor.

It localises to the cytoplasm. The enzyme catalyses L-aspartate + 2-oxoglutarate = oxaloacetate + L-glutamate. It catalyses the reaction L-cysteine + 2-oxoglutarate = 2-oxo-3-sulfanylpropanoate + L-glutamate. The catalysed reaction is (2S)-2-aminobutanoate + 2-oxoglutarate = 2-oxobutanoate + L-glutamate. It carries out the reaction 3-sulfino-L-alanine + 2-oxoglutarate = 3-sulfinopyruvate + L-glutamate. Biosynthesis of L-glutamate from L-aspartate or L-cysteine. Important regulator of levels of glutamate, the major excitatory neurotransmitter of the vertebrate central nervous system. Acts as a scavenger of glutamate in brain neuroprotection. The aspartate aminotransferase activity is involved in hepatic glucose synthesis during development and in adipocyte glyceroneogenesis. Using L-cysteine as substrate, regulates levels of mercaptopyruvate, an important source of hydrogen sulfide. Mercaptopyruvate is converted into H(2)S via the action of 3-mercaptopyruvate sulfurtransferase (3MST). Hydrogen sulfide is an important synaptic modulator and neuroprotectant in the brain. The sequence is that of Aspartate aminotransferase, cytoplasmic from Pongo abelii (Sumatran orangutan).